A 153-amino-acid chain; its full sequence is Glucose-6-phosphate 1-dehydrogenase (153 aa).

Arg21 and Lys120 together coordinate NADP(+). Residue Lys120 coordinates D-glucose 6-phosphate.

It belongs to the glucose-6-phosphate dehydrogenase family.

It localises to the cytoplasm. Its subcellular location is the cytosol. It carries out the reaction D-glucose 6-phosphate + NADP(+) = 6-phospho-D-glucono-1,5-lactone + NADPH + H(+). It functions in the pathway carbohydrate degradation; pentose phosphate pathway; D-ribulose 5-phosphate from D-glucose 6-phosphate (oxidative stage): step 1/3. In terms of biological role, cytosolic glucose-6-phosphate dehydrogenase that catalyzes the first and rate-limiting step of the oxidative branch within the pentose phosphate pathway/shunt, an alternative route to glycolysis for the dissimilation of carbohydrates and a major source of reducing power and metabolic intermediates for fatty acid and nucleic acid biosynthetic processes. The protein is Glucose-6-phosphate 1-dehydrogenase (ZW) of Sarcophaga bullata (Grey flesh fly).